Consider the following 198-residue polypeptide: Na(+)-translocating NADH-quinone reductase subunit E (198 aa).

A run of 6 helical transmembrane segments spans residues 11-31, 35-55, 77-97, 110-130, 140-160, and 176-196; these read AVFI…FLAV, VSPA…AVPV, FLNF…LEMV, GIFL…SFMV, IVYG…LAGL, and LGIT…FSGI.

This sequence belongs to the NqrDE/RnfAE family. Composed of six subunits; NqrA, NqrB, NqrC, NqrD, NqrE and NqrF.

The protein resides in the cell inner membrane. The catalysed reaction is a ubiquinone + n Na(+)(in) + NADH + H(+) = a ubiquinol + n Na(+)(out) + NAD(+). NQR complex catalyzes the reduction of ubiquinone-1 to ubiquinol by two successive reactions, coupled with the transport of Na(+) ions from the cytoplasm to the periplasm. NqrA to NqrE are probably involved in the second step, the conversion of ubisemiquinone to ubiquinol. In Haemophilus influenzae (strain ATCC 51907 / DSM 11121 / KW20 / Rd), this protein is Na(+)-translocating NADH-quinone reductase subunit E.